Consider the following 29-residue polypeptide: Beta-theraphotoxin-Gr1b (29 aa).

3 disulfides stabilise this stretch: Cys-2-Cys-16, Cys-9-Cys-21, and Cys-15-Cys-25. Leu-29 is modified (leucine amide).

Belongs to the neurotoxin 30 (phrixotoxin) family. Expressed by the venom gland.

It localises to the secreted. Inhibits the voltage-gated sodium channels Nav1.1/SCN1A (IC(50)=360 nM), Nav1.2/SCN2A (IC(50)=600 nM), Nav1.3/SCN3A (IC(50)=1280), Nav1.4/SCN4A (IC(50)=330 nM), Nav1.6/SCN8A (IC(50)=1200 nM), Nav1.7/SCN9A (IC(50)=1-40 nM), and voltage-gated potassium channels Kv11.1/KCNH2 (IC(50)=4.8 uM). Induces analgesia in mammals. This analgesia is mediated by a non-opioid receptor related mechanism. The sequence is that of Beta-theraphotoxin-Gr1b from Grammostola rosea (Chilean rose tarantula).